A 222-amino-acid polypeptide reads, in one-letter code: Putative thymidylate synthase (222 aa).

Cysteine 146 is a catalytic residue.

It belongs to the thymidylate synthase family. Archaeal-type ThyA subfamily. Monomer.

The protein resides in the cytoplasm. It participates in pyrimidine metabolism; dTTP biosynthesis. May catalyze the biosynthesis of dTMP using an unknown cosubstrate. In Methanothermobacter thermautotrophicus (strain ATCC 29096 / DSM 1053 / JCM 10044 / NBRC 100330 / Delta H) (Methanobacterium thermoautotrophicum), this protein is Putative thymidylate synthase.